We begin with the raw amino-acid sequence, 103 residues long: Small ribosomal subunit protein uS10 (103 aa).

Belongs to the universal ribosomal protein uS10 family. In terms of assembly, part of the 30S ribosomal subunit.

Its function is as follows. Involved in the binding of tRNA to the ribosomes. The protein is Small ribosomal subunit protein uS10 of Ruthia magnifica subsp. Calyptogena magnifica.